The following is an 806-amino-acid chain: Phenylalanine--tRNA ligase beta subunit (806 aa).

Residues 40–155 (NKGVKGVVVG…SDAEVGADAL (116 aa)) enclose the tRNA-binding domain. Residues 409-484 (VQERTVSVTA…RLYGYDHIPV (76 aa)) form the B5 domain. Aspartate 462, aspartate 468, glutamate 471, and glutamate 472 together coordinate Mg(2+). Positions 712-805 (PRFPSMTRDM…VEEKFGAELR (94 aa)) constitute an FDX-ACB domain.

Belongs to the phenylalanyl-tRNA synthetase beta subunit family. Type 1 subfamily. In terms of assembly, tetramer of two alpha and two beta subunits. Mg(2+) is required as a cofactor.

Its subcellular location is the cytoplasm. The enzyme catalyses tRNA(Phe) + L-phenylalanine + ATP = L-phenylalanyl-tRNA(Phe) + AMP + diphosphate + H(+). This chain is Phenylalanine--tRNA ligase beta subunit, found in Bacillus thuringiensis subsp. konkukian (strain 97-27).